A 550-amino-acid polypeptide reads, in one-letter code: Chaperonin GroEL (550 aa).

Residues 30-33 (TLGP), K51, 87-91 (DGTTT), G415, 479-481 (NAA), and D495 each bind ATP.

Belongs to the chaperonin (HSP60) family. Forms a cylinder of 14 subunits composed of two heptameric rings stacked back-to-back. Interacts with the co-chaperonin GroES.

Its subcellular location is the cytoplasm. It carries out the reaction ATP + H2O + a folded polypeptide = ADP + phosphate + an unfolded polypeptide.. In terms of biological role, together with its co-chaperonin GroES, plays an essential role in assisting protein folding. The GroEL-GroES system forms a nano-cage that allows encapsulation of the non-native substrate proteins and provides a physical environment optimized to promote and accelerate protein folding. This is Chaperonin GroEL from Marinobacter nauticus (strain ATCC 700491 / DSM 11845 / VT8) (Marinobacter aquaeolei).